A 420-amino-acid chain; its full sequence is D-tagatose-1,6-bisphosphate aldolase subunit GatZ (420 aa).

Belongs to the GatZ/KbaZ family. GatZ subfamily. Forms a complex with GatY.

It participates in carbohydrate metabolism; D-tagatose 6-phosphate degradation; D-glyceraldehyde 3-phosphate and glycerone phosphate from D-tagatose 6-phosphate: step 2/2. Component of the tagatose-1,6-bisphosphate aldolase GatYZ that is required for full activity and stability of the Y subunit. Could have a chaperone-like function for the proper and stable folding of GatY. When expressed alone, GatZ does not show any aldolase activity. Is involved in the catabolism of galactitol. This chain is D-tagatose-1,6-bisphosphate aldolase subunit GatZ, found in Escherichia coli (strain SMS-3-5 / SECEC).